Reading from the N-terminus, the 390-residue chain is Succinate--CoA ligase [ADP-forming] subunit beta (390 aa).

One can recognise an ATP-grasp domain in the interval 9–248 (KDILRKFGVS…ISEEDPFEVE (240 aa)). ATP is bound by residues K50, 57 to 59 (GRG), E103, M106, and E111. N203 and D217 together coordinate Mg(2+). Substrate-binding positions include N268 and 325-327 (GIV).

Belongs to the succinate/malate CoA ligase beta subunit family. Heterotetramer of two alpha and two beta subunits. It depends on Mg(2+) as a cofactor.

It carries out the reaction succinate + ATP + CoA = succinyl-CoA + ADP + phosphate. The enzyme catalyses GTP + succinate + CoA = succinyl-CoA + GDP + phosphate. Its pathway is carbohydrate metabolism; tricarboxylic acid cycle; succinate from succinyl-CoA (ligase route): step 1/1. In terms of biological role, succinyl-CoA synthetase functions in the citric acid cycle (TCA), coupling the hydrolysis of succinyl-CoA to the synthesis of either ATP or GTP and thus represents the only step of substrate-level phosphorylation in the TCA. The beta subunit provides nucleotide specificity of the enzyme and binds the substrate succinate, while the binding sites for coenzyme A and phosphate are found in the alpha subunit. This chain is Succinate--CoA ligase [ADP-forming] subunit beta, found in Prosthecochloris aestuarii (strain DSM 271 / SK 413).